We begin with the raw amino-acid sequence, 362 residues long: 3-dehydroquinate synthase (362 aa).

Residues 72–77, 106–110, 130–131, Lys143, Lys152, and 170–173 contribute to the NAD(+) site; these read DGEQYK, GVVGD, TT, and CLKT. Zn(2+) contacts are provided by Glu185, His248, and His265.

It belongs to the sugar phosphate cyclases superfamily. Dehydroquinate synthase family. The cofactor is Co(2+). Zn(2+) is required as a cofactor. Requires NAD(+) as cofactor.

It is found in the cytoplasm. It catalyses the reaction 7-phospho-2-dehydro-3-deoxy-D-arabino-heptonate = 3-dehydroquinate + phosphate. It functions in the pathway metabolic intermediate biosynthesis; chorismate biosynthesis; chorismate from D-erythrose 4-phosphate and phosphoenolpyruvate: step 2/7. Catalyzes the conversion of 3-deoxy-D-arabino-heptulosonate 7-phosphate (DAHP) to dehydroquinate (DHQ). In Aliivibrio fischeri (strain ATCC 700601 / ES114) (Vibrio fischeri), this protein is 3-dehydroquinate synthase.